Reading from the N-terminus, the 666-residue chain is uncharacterized protein (666 aa).

Residues 263 to 553 enclose the RNB domain; it reads RFDLTTLKTY…THFQMKAYLR (291 aa).

Belongs to the RNR ribonuclease family.

This is an uncharacterized protein from Synechocystis sp. (strain ATCC 27184 / PCC 6803 / Kazusa).